Reading from the N-terminus, the 284-residue chain is MGQALGLVQVDQSTVAIKESFGKFDEVLEPGCHFLPWCIGKQIAGYLSLRVQQLDVRCETKTKDNVFVNVVASVQYRALAEKASDAFYRLSNTREQIQSYVFDVIRASVPKMNLDDAFEQKNEIAKAVEDELEKAMSMYGYEIVQTLIVDIEPDEHVKRAMNEINAAARLRVAANEKAEAEKILQIKRAEGDAESKYLAGLGIARQRQAIVDGLRDSVLAFSENVPGTSAKDVMDMVLVTQYFDTMKEIGASSKSSSVFIPHGPGAVKDIAAQIRDGQLQAKLI.

Gly-2 is lipidated: N-myristoyl glycine.

Interacts with LRR1.

It is found in the cell membrane. Its function is as follows. Positive regulator of hypersensitive response (HR)-like cell death. May be involved in potassium ion channel regulation. This is Hypersensitive-induced response protein 1 from Oryza sativa subsp. japonica (Rice).